The chain runs to 705 residues: Dolichyl-diphosphooligosaccharide--protein glycosyltransferase subunit STT3A (705 aa).

Over 1 to 17 (MTKLGFLRLSYEKQDTL) the chain is Cytoplasmic. Residues 18 to 38 (LKLLILSMAAVLSFSTRLFAV) traverse the membrane as a helical segment. Residues 39–119 (LRFESVIHEF…IDIRNVCVFL (81 aa)) lie on the Lumenal side of the membrane. Positions 47–49 (EFD) match the DXD motif 1 motif. D49 lines the Mn(2+) pocket. Residues 120-138 (APLFSSFTTIVTYHLTKEL) form a helical membrane-spanning segment. Residues 139 to 140 (KD) are Cytoplasmic-facing. A helical transmembrane segment spans residues 141-158 (AGAGLLAAAMIAVVPGYI). Topologically, residues 159-169 (SRSVAGSYDNE) are lumenal. Mn(2+) is bound by residues D167 and E169. Residues 167 to 169 (DNE) carry the DXD motif 2 motif. The helical transmembrane segment at 170–189 (GIAIFCMLLTYYMWIKAVKT) threads the bilayer. Over 190-191 (GS) the chain is Cytoplasmic. A helical transmembrane segment spans residues 192-206 (IYWAAKCALAYFYMV). The Lumenal portion of the chain corresponds to 207-211 (SSWGG). Residues 212–228 (YVFLINLIPLHVLVLML) traverse the membrane as a helical segment. At 229 to 233 (TGRFS) the chain is on the cytoplasmic side. A helical membrane pass occupies residues 234–259 (HRIYVAYCTVYCLGTILSMQISFVGF). Residues 260-267 (QPVLSSEH) are Lumenal-facing. Residues 268–287 (MAAFGVFGLCQIHAFVDYLR) form a helical membrane-spanning segment. Over 288–300 (SKLNPQQFEVLFR) the chain is Cytoplasmic. Residues 301–321 (SVISLVGFVLLTIGALLMLTG) traverse the membrane as a helical segment. At 322-356 (KISPWTGRFYSLLDPSYAKNNIPIIASVSEHQPTT) the chain is on the lumenal side. An SVSE motif motif is present at residues 348-351 (SVSE). A helical membrane pass occupies residues 357–379 (WSSYYFDLQLLVFMFPVGLYYCF). The Cytoplasmic segment spans residues 380 to 385 (SNLSDA). Residues 386–402 (RIFIIMYGVTSMYFSAV) traverse the membrane as a helical segment. The Lumenal portion of the chain corresponds to 403 to 406 (MVRL). Dolichyl diphosphooligosaccharide is bound at residue R405. A helical membrane pass occupies residues 407–428 (MLVLAPVMCILSGIGVSQVLST). Residues 429-453 (YMKNLDISRQDKKSKKQQDSTYPIK) lie on the Cytoplasmic side of the membrane. A helical membrane pass occupies residues 454-473 (NEVASGMILVMAFFLITYTF). Residues 474-705 (HSTWVTSEAY…DLDNRGLSRT (232 aa)) lie on the Lumenal side of the membrane. Residues 525–527 (WWD) are interacts with target acceptor peptide in protein substrate. The WWDYG motif signature appears at 525–529 (WWDYG). Position 530 (Y530) interacts with dolichyl diphosphooligosaccharide. N537 and N544 each carry an N-linked (GlcNAc...) asparagine glycan. An N-linked (GlcNAc...) (high mannose) asparagine glycan is attached at N548. The DK motif motif lies at 592 to 599 (DINKFLWM).

The protein belongs to the STT3 family. As to quaternary structure, component of the oligosaccharyltransferase (OST) complex. There are 2 OST complexes, OST-A and OST-B, which contain STT3A or STT3B as catalytic subunit, respectively. OST-A and OST-B contain common core subunits RPN1, RPN2, OST48, OST4, DAD1 and TMEM258, and OST-A contains DC2/OSTC and KRTCAP2/KCP2 specific accessory subunits. OST-A complex assembly occurs through the formation of 3 subcomplexes. Subcomplex 1 contains RPN1 and TMEM258, subcomplex 2 contains the OST-A-specific subunits STT3A, DC2/OSTC, and KCP2 as well as the core subunit OST4, and subcomplex 3 contains RPN2, DAD1, and OST48. The OST-A complex can form stable complexes with the Sec61 complex or with both the Sec61 and TRAP complexes. It depends on Mg(2+) as a cofactor. Mn(2+) serves as cofactor.

The protein resides in the endoplasmic reticulum membrane. The catalysed reaction is a di-trans,poly-cis-dolichyl diphosphooligosaccharide + L-asparaginyl-[protein] = N(4)-(oligosaccharide-(1-&gt;4)-N-acetyl-beta-D-glucosaminyl-(1-&gt;4)-N-acetyl-beta-D-glucosaminyl)-L-asparaginyl-[protein] + a di-trans,poly-cis-dolichyl diphosphate + H(+). It participates in protein modification; protein glycosylation. In terms of biological role, catalytic subunit of the oligosaccharyl transferase (OST) complex that catalyzes the initial transfer of a defined glycan (Glc(3)Man(9)GlcNAc(2) in eukaryotes) from the lipid carrier dolichol-pyrophosphate to an asparagine residue within an Asn-X-Ser/Thr consensus motif in nascent polypeptide chains, the first step in protein N-glycosylation. N-glycosylation occurs cotranslationally and the complex associates with the Sec61 complex at the channel-forming translocon complex that mediates protein translocation across the endoplasmic reticulum (ER). All subunits are required for a maximal enzyme activity. This subunit contains the active site and the acceptor peptide and donor lipid-linked oligosaccharide (LLO) binding pockets. STT3A is present in the majority of OST complexes and mediates cotranslational N-glycosylation of most sites on target proteins, while STT3B-containing complexes are required for efficient post-translational glycosylation and mediate glycosylation of sites that have been skipped by STT3A. STT3A-containing OST-A complex is also required to prevent hyperglycosylation of some target proteins by preventing glycosylation of facultative sites before folding of target proteins is completed. In Bos taurus (Bovine), this protein is Dolichyl-diphosphooligosaccharide--protein glycosyltransferase subunit STT3A.